A 432-amino-acid chain; its full sequence is Glutamyl-tRNA reductase (432 aa).

Substrate is bound by residues 49–52 (TCNR), S107, 112–114 (ETQ), and Q118. The Nucleophile role is filled by C50. 186 to 191 (GAGEMG) serves as a coordination point for NADP(+).

This sequence belongs to the glutamyl-tRNA reductase family. In terms of assembly, homodimer.

It carries out the reaction (S)-4-amino-5-oxopentanoate + tRNA(Glu) + NADP(+) = L-glutamyl-tRNA(Glu) + NADPH + H(+). Its pathway is porphyrin-containing compound metabolism; protoporphyrin-IX biosynthesis; 5-aminolevulinate from L-glutamyl-tRNA(Glu): step 1/2. Its function is as follows. Catalyzes the NADPH-dependent reduction of glutamyl-tRNA(Glu) to glutamate 1-semialdehyde (GSA). The polypeptide is Glutamyl-tRNA reductase (Campylobacter jejuni subsp. jejuni serotype O:2 (strain ATCC 700819 / NCTC 11168)).